The chain runs to 285 residues: MTSIHEDTHIGYAKLTIRSLERSLQFYCNVIGFQVLKKTDRQAELTADGKRVLLILEENPSAVVLPERSVTGLYHFAILLPDRKELGIALARLIEHGIAIGHGDHAVSEALYLSDPDGNGIEMYADRPRSTWQRDREGNYVMTTTAVDIEGLLEEAGDERKTSLPNDTIIGHIHLHVSDLKEAKAFYTDVLGFDIVGNYAGMSALFVSAGGYHHHIGLNIWAGRNAPPKPTNASGLDYYTVVLPHQEELDLVANRVKHAGYSIEETENSFRVKDPVSGAYITFVI.

VOC domains lie at 9–126 and 169–285; these read HIGY…MYAD and IIGH…TFVI. Fe cation is bound by residues His-213 and Glu-264.

The protein belongs to the extradiol ring-cleavage dioxygenase family. It depends on Fe(2+) as a cofactor.

It catalyses the reaction catechol + O2 = (2Z,4E)-2-hydroxy-6-oxohexa-2,4-dienoate + H(+). Involved in the meta cleavage of catechol to 2-hydroxymuconic semialdehyde. Essential for growth and viability in the presence of catechol and probably involved in the detoxification of catechol. This Bacillus subtilis (strain 168) protein is Catechol-2,3-dioxygenase (catE).